We begin with the raw amino-acid sequence, 416 residues long: Glutamyl-tRNA reductase (416 aa).

Residues 49–52 (TCNR), Ser105, 110–112 (EPQ), and Gln116 contribute to the substrate site. Cys50 acts as the Nucleophile in catalysis. 185–190 (GAGEMI) is a binding site for NADP(+).

This sequence belongs to the glutamyl-tRNA reductase family. Homodimer.

The catalysed reaction is (S)-4-amino-5-oxopentanoate + tRNA(Glu) + NADP(+) = L-glutamyl-tRNA(Glu) + NADPH + H(+). It functions in the pathway porphyrin-containing compound metabolism; protoporphyrin-IX biosynthesis; 5-aminolevulinate from L-glutamyl-tRNA(Glu): step 1/2. Catalyzes the NADPH-dependent reduction of glutamyl-tRNA(Glu) to glutamate 1-semialdehyde (GSA). The polypeptide is Glutamyl-tRNA reductase (Nitrosomonas europaea (strain ATCC 19718 / CIP 103999 / KCTC 2705 / NBRC 14298)).